A 377-amino-acid polypeptide reads, in one-letter code: Flagellin D (377 aa).

A coiled-coil region spans residues 104-128 (NSKADRVAIQEEVTALNDELNRIAE).

The protein belongs to the bacterial flagellin family. In terms of assembly, heteromer of multiple flagellin subunits including FlaA, FlaB, FlaC, FlaD and possibly FlaE.

The protein resides in the secreted. It is found in the bacterial flagellum. Functionally, flagellin is the subunit protein which polymerizes to form the filaments of bacterial flagella. FlaD is not essential for flagellar synthesis and motility. May have a role in virulence unrelated to motility. The polypeptide is Flagellin D (flaD) (Vibrio anguillarum (Listonella anguillarum)).